The chain runs to 479 residues: Glutamyl-tRNA reductase (479 aa).

Substrate is bound by residues 49-52 (TCNR), S109, 114-116 (EQQ), and Q120. Catalysis depends on C50, which acts as the Nucleophile. Position 191–196 (191–196 (GAGSMG)) interacts with NADP(+).

The protein belongs to the glutamyl-tRNA reductase family. In terms of assembly, homodimer.

The enzyme catalyses (S)-4-amino-5-oxopentanoate + tRNA(Glu) + NADP(+) = L-glutamyl-tRNA(Glu) + NADPH + H(+). The protein operates within porphyrin-containing compound metabolism; protoporphyrin-IX biosynthesis; 5-aminolevulinate from L-glutamyl-tRNA(Glu): step 1/2. Catalyzes the NADPH-dependent reduction of glutamyl-tRNA(Glu) to glutamate 1-semialdehyde (GSA). The chain is Glutamyl-tRNA reductase from Rhodococcus jostii (strain RHA1).